A 155-amino-acid chain; its full sequence is Ribosomal RNA large subunit methyltransferase H (155 aa).

Residues Leu-73, Gly-104, and 123–128 contribute to the S-adenosyl-L-methionine site; that span reads LSPLTL.

The protein belongs to the RNA methyltransferase RlmH family. As to quaternary structure, homodimer.

The protein localises to the cytoplasm. The enzyme catalyses pseudouridine(1915) in 23S rRNA + S-adenosyl-L-methionine = N(3)-methylpseudouridine(1915) in 23S rRNA + S-adenosyl-L-homocysteine + H(+). In terms of biological role, specifically methylates the pseudouridine at position 1915 (m3Psi1915) in 23S rRNA. The chain is Ribosomal RNA large subunit methyltransferase H from Pseudomonas fluorescens (strain ATCC BAA-477 / NRRL B-23932 / Pf-5).